Reading from the N-terminus, the 374-residue chain is Succinyl-diaminopimelate desuccinylase (374 aa).

H66 lines the Zn(2+) pocket. Residue D68 is part of the active site. D99 contacts Zn(2+). E133 serves as the catalytic Proton acceptor. Positions 134, 162, and 348 each coordinate Zn(2+).

It belongs to the peptidase M20A family. DapE subfamily. As to quaternary structure, homodimer. It depends on Zn(2+) as a cofactor. Co(2+) is required as a cofactor.

The enzyme catalyses N-succinyl-(2S,6S)-2,6-diaminopimelate + H2O = (2S,6S)-2,6-diaminopimelate + succinate. Its pathway is amino-acid biosynthesis; L-lysine biosynthesis via DAP pathway; LL-2,6-diaminopimelate from (S)-tetrahydrodipicolinate (succinylase route): step 3/3. Catalyzes the hydrolysis of N-succinyl-L,L-diaminopimelic acid (SDAP), forming succinate and LL-2,6-diaminopimelate (DAP), an intermediate involved in the bacterial biosynthesis of lysine and meso-diaminopimelic acid, an essential component of bacterial cell walls. This is Succinyl-diaminopimelate desuccinylase from Coxiella burnetii (strain CbuK_Q154) (Coxiella burnetii (strain Q154)).